A 284-amino-acid polypeptide reads, in one-letter code: Tropomyosin (284 aa).

A coiled-coil region spans residues 1-284 (MDAIKKKMQA…DQTFQELFGY (284 aa)). Positions 113–142 (LEKATHTADESDRVRKVMENRSFQDEERAN) are enriched in basic and acidic residues. The segment at 113 to 143 (LEKATHTADESDRVRKVMENRSFQDEERANT) is disordered.

It belongs to the tropomyosin family.

Functionally, tropomyosin, in association with the troponin complex, plays a central role in the calcium dependent regulation of muscle contraction. In Acanthocheilonema viteae (Filarial nematode worm), this protein is Tropomyosin.